The primary structure comprises 265 residues: Thiazole synthase (265 aa).

Catalysis depends on Lys-106, which acts as the Schiff-base intermediate with DXP. 1-deoxy-D-xylulose 5-phosphate contacts are provided by residues Gly-167, 193 to 194, and 215 to 216; these read AG and NS.

Belongs to the ThiG family. As to quaternary structure, homotetramer. Forms heterodimers with either ThiH or ThiS.

Its subcellular location is the cytoplasm. It carries out the reaction [ThiS sulfur-carrier protein]-C-terminal-Gly-aminoethanethioate + 2-iminoacetate + 1-deoxy-D-xylulose 5-phosphate = [ThiS sulfur-carrier protein]-C-terminal Gly-Gly + 2-[(2R,5Z)-2-carboxy-4-methylthiazol-5(2H)-ylidene]ethyl phosphate + 2 H2O + H(+). The protein operates within cofactor biosynthesis; thiamine diphosphate biosynthesis. In terms of biological role, catalyzes the rearrangement of 1-deoxy-D-xylulose 5-phosphate (DXP) to produce the thiazole phosphate moiety of thiamine. Sulfur is provided by the thiocarboxylate moiety of the carrier protein ThiS. In vitro, sulfur can be provided by H(2)S. The sequence is that of Thiazole synthase from Prochlorococcus marinus (strain MIT 9515).